A 100-amino-acid polypeptide reads, in one-letter code: Large ribosomal subunit protein uL23 (100 aa).

This sequence belongs to the universal ribosomal protein uL23 family. Part of the 50S ribosomal subunit. Contacts protein L29, and trigger factor when it is bound to the ribosome.

In terms of biological role, one of the early assembly proteins it binds 23S rRNA. One of the proteins that surrounds the polypeptide exit tunnel on the outside of the ribosome. Forms the main docking site for trigger factor binding to the ribosome. This Pasteurella multocida (strain Pm70) protein is Large ribosomal subunit protein uL23.